Consider the following 331-residue polypeptide: 5,10-methylenetetrahydromethanopterin reductase (331 aa).

The protein belongs to the mer family.

Its subcellular location is the cytoplasm. It carries out the reaction 5-methyl-5,6,7,8-tetrahydromethanopterin + oxidized coenzyme F420-(gamma-L-Glu)(n) + H(+) = 5,10-methylenetetrahydromethanopterin + reduced coenzyme F420-(gamma-L-Glu)(n). The protein operates within one-carbon metabolism; methanogenesis from CO(2); methyl-coenzyme M from 5,10-methylene-5,6,7,8-tetrahydromethanopterin: step 1/2. Functionally, catalyzes the reversible reduction of methylene-H(4)MPT to methyl-H(4)MPT. The sequence is that of 5,10-methylenetetrahydromethanopterin reductase from Methanocaldococcus jannaschii (strain ATCC 43067 / DSM 2661 / JAL-1 / JCM 10045 / NBRC 100440) (Methanococcus jannaschii).